The sequence spans 157 residues: SsrA-binding protein (157 aa).

The interval 130-157 (KAEHDKRDTIKEREGKREVERVMKSRHR) is disordered.

This sequence belongs to the SmpB family.

The protein localises to the cytoplasm. In terms of biological role, required for rescue of stalled ribosomes mediated by trans-translation. Binds to transfer-messenger RNA (tmRNA), required for stable association of tmRNA with ribosomes. tmRNA and SmpB together mimic tRNA shape, replacing the anticodon stem-loop with SmpB. tmRNA is encoded by the ssrA gene; the 2 termini fold to resemble tRNA(Ala) and it encodes a 'tag peptide', a short internal open reading frame. During trans-translation Ala-aminoacylated tmRNA acts like a tRNA, entering the A-site of stalled ribosomes, displacing the stalled mRNA. The ribosome then switches to translate the ORF on the tmRNA; the nascent peptide is terminated with the 'tag peptide' encoded by the tmRNA and targeted for degradation. The ribosome is freed to recommence translation, which seems to be the essential function of trans-translation. This is SsrA-binding protein from Acidovorax sp. (strain JS42).